Reading from the N-terminus, the 380-residue chain is Mitogen-activated protein kinase 3 (380 aa).

Alanine 2 bears the N-acetylalanine mark. Residues 43-331 form the Protein kinase domain; the sequence is YTQLQYIGEG…VEEALAHPYL (289 aa). Residues 49-57 and lysine 72 contribute to the ATP site; that span reads IGEGAYGMV. The active-site Proton acceptor is the aspartate 167. A Phosphothreonine modification is found at threonine 199. Threonine 203 is subject to Phosphothreonine; by MAP2K1 and MAP2K2. The short motif at 203 to 205 is the TXY element; sequence TEY. The residue at position 205 (tyrosine 205) is a Phosphotyrosine; by MAP2K1 and MAP2K2. Threonine 208 is subject to Phosphothreonine; by autocatalysis.

It belongs to the protein kinase superfamily. CMGC Ser/Thr protein kinase family. MAP kinase subfamily. Binds both upstream activators and downstream substrates in multimolecular complexes. Found in a complex with at least BRAF, HRAS, MAP2K1/MEK1, MAPK3 and RGS14. Interacts with ADAM15, ARRB2, CANX, DAPK1 (via death domain), HSF4, IER3, MAP2K1/MEK1, MORG1, NISCH, PEA15, SGK1 and MKNK2. MKNK2 isoform 1 binding prevents from dephosphorylation and inactivation. Interacts with TPR. Interacts with HSF1 (via D domain and preferentially with hyperphosphorylated form); this interaction occurs upon heat shock. Interacts with CDKN2AIP. Interacts with CAVIN4. Interacts with GIT1; this interaction is necessary for MAPK3 localization to focal adhesions. Interacts with ZNF263. Interacts with EBF4. Mg(2+) serves as cofactor. In terms of processing, phosphorylated upon FLT3 and KIT signaling. Ligand-activated ALK induces tyrosine phosphorylation. Dephosphorylated by PTPRJ at Tyr-205. Dually phosphorylated on Thr-203 and Tyr-205, which activates the enzyme. Post-translationally, ubiquitinated by TRIM15 via 'Lys-63'-linked ubiquitination; leading to activation. Deubiquitinated by CYLD. In terms of tissue distribution, highest levels within the nervous system, expressed in different tissues, mostly in intestine, placenta and lung.

It localises to the cytoplasm. Its subcellular location is the nucleus. The protein resides in the membrane. It is found in the caveola. The protein localises to the cell junction. It localises to the focal adhesion. The catalysed reaction is L-seryl-[protein] + ATP = O-phospho-L-seryl-[protein] + ADP + H(+). The enzyme catalyses L-threonyl-[protein] + ATP = O-phospho-L-threonyl-[protein] + ADP + H(+). Its activity is regulated as follows. Phosphorylated by MAP2K1/MEK1 and MAP2K2/MEK2 on Thr-203 and Tyr-205 in response to external stimuli like insulin or NGF. Both phosphorylations are required for activity. This phosphorylation causes dramatic conformational changes, which enable full activation and interaction of MAPK1/ERK2 with its substrates. Dephosphorylated and inactivated by DUSP3, DUSP6 and DUSP9. Its function is as follows. Serine/threonine kinase which acts as an essential component of the MAP kinase signal transduction pathway. MAPK1/ERK2 and MAPK3/ERK1 are the 2 MAPKs which play an important role in the MAPK/ERK cascade. They participate also in a signaling cascade initiated by activated KIT and KITLG/SCF. Depending on the cellular context, the MAPK/ERK cascade mediates diverse biological functions such as cell growth, adhesion, survival and differentiation through the regulation of transcription, translation, cytoskeletal rearrangements. The MAPK/ERK cascade also plays a role in initiation and regulation of meiosis, mitosis, and postmitotic functions in differentiated cells by phosphorylating a number of transcription factors. About 160 substrates have already been discovered for ERKs. Many of these substrates are localized in the nucleus, and seem to participate in the regulation of transcription upon stimulation. However, other substrates are found in the cytosol as well as in other cellular organelles, and those are responsible for processes such as translation, mitosis and apoptosis. Moreover, the MAPK/ERK cascade is also involved in the regulation of the endosomal dynamics, including lysosome processing and endosome cycling through the perinuclear recycling compartment (PNRC); as well as in the fragmentation of the Golgi apparatus during mitosis. The substrates include transcription factors (such as ATF2, BCL6, ELK1, ERF, FOS, HSF4 or SPZ1), cytoskeletal elements (such as CANX, CTTN, GJA1, MAP2, MAPT, PXN, SORBS3 or STMN1), regulators of apoptosis (such as BAD, BTG2, CASP9, DAPK1, IER3, MCL1 or PPARG), regulators of translation (such as EIF4EBP1) and a variety of other signaling-related molecules (like ARHGEF2, DEPTOR, FRS2 or GRB10). Protein kinases (such as RAF1, RPS6KA1/RSK1, RPS6KA3/RSK2, RPS6KA2/RSK3, RPS6KA6/RSK4, SYK, MKNK1/MNK1, MKNK2/MNK2, RPS6KA5/MSK1, RPS6KA4/MSK2, MAPKAPK3 or MAPKAPK5) and phosphatases (such as DUSP1, DUSP4, DUSP6 or DUSP16) are other substrates which enable the propagation the MAPK/ERK signal to additional cytosolic and nuclear targets, thereby extending the specificity of the cascade. This chain is Mitogen-activated protein kinase 3 (Mapk3), found in Rattus norvegicus (Rat).